We begin with the raw amino-acid sequence, 103 residues long: Small ribosomal subunit protein uS10 (103 aa).

The protein belongs to the universal ribosomal protein uS10 family. Part of the 30S ribosomal subunit.

Involved in the binding of tRNA to the ribosomes. This is Small ribosomal subunit protein uS10 from Cellvibrio japonicus (strain Ueda107) (Pseudomonas fluorescens subsp. cellulosa).